Here is a 162-residue protein sequence, read N- to C-terminus: Beta-lactoglobulin-1 (162 aa).

2 cysteine pairs are disulfide-bonded: cysteine 66/cysteine 160 and cysteine 106/cysteine 119.

The protein belongs to the calycin superfamily. Lipocalin family. As to quaternary structure, monomer. Synthesized in mammary gland and secreted in milk.

It localises to the secreted. Its function is as follows. Primary component of whey, it binds retinol and is probably involved in the transport of that molecule. This Equus asinus (Donkey) protein is Beta-lactoglobulin-1 (LGB1).